The following is a 469-amino-acid chain: Protein translocase subunit SecY (469 aa).

The Cytoplasmic segment spans residues 1 to 20 (MSFIDSLATLGQYLPAVTKP). A helical membrane pass occupies residues 21–47 (KEKPSLGQKLVWSLVAVIIYLIMASTP). Topologically, residues 48–59 (LYGITSASFFKN) are extracellular. An intramembrane region (helical) is located at residues 60–67 (LILEQIIF). Residues 60–88 (LILEQIIFASTTGTLAQLGIGPIITAGLI) traverse the membrane as a discontinuously helical segment. Residues 68–79 (ASTTGTLAQLGI) lie within the membrane without spanning it. The segment at residues 80–88 (GPIITAGLI) is an intramembrane region (helical). Residues 89 to 109 (MQILAGSKLISIDLNDPDDRV) are Cytoplasmic-facing. The helical transmembrane segment at 110–131 (KFTEAQKGLAFIFILVESALFG) threads the bilayer. Residues 132-146 (YVLARTSTTINASIL) are Extracellular-facing. Residues 147–171 (FIAGIVIAQLIVATYLILLLDELIQ) form a helical membrane-spanning segment. The Cytoplasmic portion of the chain corresponds to 172-178 (KGWGLGS). Residues 179–197 (GVSLFILAGVMKIMFWDMF) traverse the membrane as a helical segment. At 198-240 (GIASVSSQNLPIGFFPALFTALASHSDVLNLIVNTSTKNLFQP) the chain is on the extracellular side. The chain crosses the membrane as a helical span at residues 241–262 (DLVGLVTTIALIIITIYLTTMT). Topologically, residues 263-287 (IEIPVTSQKLRGIRRTIPLNFLYVS) are cytoplasmic. The chain crosses the membrane as a helical span at residues 288–309 (SIPVIFVAVLGSDIQLFASLAS). Over 310–347 (YVSPSASNILNTVSGVFFFPPPNSAIPHSIYAVVLDPL) the chain is Extracellular. A helical transmembrane segment spans residues 348-367 (GALEYAVVFIVLSILFGILW). Topologically, residues 368–410 (VDVAGLDPATQAQQLVEAGIEIPGVRNNPKIIEGILARYIYPL) are cytoplasmic. Residues 411-429 (AFFSSIIVGLIAVFATLLG) traverse the membrane as a helical segment. Residues 430–432 (AYG) lie on the Extracellular side of the membrane. A helical transmembrane segment spans residues 433 to 447 (TGIGILLAVTIAIQY). Over 448–469 (YSLLAYERSLEMYPLLKRLIGE) the chain is Cytoplasmic.

Belongs to the SecY/SEC61-alpha family. In terms of assembly, component of the Sec protein translocase complex. Heterotrimer consisting of alpha (SecY), beta (SecG) and gamma (SecE) subunits. The heterotrimers can form oligomers, although 1 heterotrimer is thought to be able to translocate proteins. Interacts with the ribosome. May interact with SecDF, and other proteins may be involved.

It localises to the cell membrane. Functionally, the central subunit of the protein translocation channel SecYEG. Consists of two halves formed by TMs 1-5 and 6-10. These two domains form a lateral gate at the front which open onto the bilayer between TMs 2 and 7, and are clamped together by SecE at the back. The channel is closed by both a pore ring composed of hydrophobic SecY resides and a short helix (helix 2A) on the extracellular side of the membrane which forms a plug. The plug probably moves laterally to allow the channel to open. The ring and the pore may move independently. The polypeptide is Protein translocase subunit SecY (Saccharolobus solfataricus (strain ATCC 35092 / DSM 1617 / JCM 11322 / P2) (Sulfolobus solfataricus)).